A 172-amino-acid chain; its full sequence is Adenine phosphoribosyltransferase (172 aa).

The protein belongs to the purine/pyrimidine phosphoribosyltransferase family. As to quaternary structure, homodimer.

The protein resides in the cytoplasm. The enzyme catalyses AMP + diphosphate = 5-phospho-alpha-D-ribose 1-diphosphate + adenine. It functions in the pathway purine metabolism; AMP biosynthesis via salvage pathway; AMP from adenine: step 1/1. Functionally, catalyzes a salvage reaction resulting in the formation of AMP, that is energically less costly than de novo synthesis. This is Adenine phosphoribosyltransferase from Anaeromyxobacter dehalogenans (strain 2CP-C).